Reading from the N-terminus, the 351-residue chain is Riboflavin-binding protein RibY (351 aa).

Positions 1–19 are cleaved as a signal peptide; the sequence is MMKLRVLTLGILIILLITA. Cys20 carries the N-palmitoyl cysteine lipid modification. A lipid anchor (S-diacylglycerol cysteine) is attached at Cys20.

This sequence belongs to the NMT1 family. The complex is likely composed of an ATP-binding protein, a transmembrane protein (RibX) and a solute-binding protein (RibY).

The protein localises to the cell membrane. Functionally, part of an ABC transporter complex that transports riboflavin into the cell. Binds riboflavin. The polypeptide is Riboflavin-binding protein RibY (Chloroflexus aurantiacus (strain ATCC 29366 / DSM 635 / J-10-fl)).